The chain runs to 249 residues: Flavin-dependent thymidylate synthase (249 aa).

The 229-residue stretch at 7 to 235 (LDVQLIAATA…PVLFDDFHIT (229 aa)) folds into the ThyX domain. Residues 94–97 (ELVR), 105–109 (QLSQR), and Arg-174 each bind dUMP. Residues 97-99 (RHR) and Gln-105 each bind FAD. A ThyX motif motif is present at residues 97–107 (RHRHFSFSQLS). Residues 190 to 192 (NYR) and His-196 each bind FAD. DUMP is bound at residue Arg-201. Arg-201 (involved in ionization of N3 of dUMP, leading to its activation) is an active-site residue.

Belongs to the thymidylate synthase ThyX family. In terms of assembly, homotetramer. The cofactor is FAD.

The catalysed reaction is dUMP + (6R)-5,10-methylene-5,6,7,8-tetrahydrofolate + NADPH + H(+) = dTMP + (6S)-5,6,7,8-tetrahydrofolate + NADP(+). The protein operates within pyrimidine metabolism; dTTP biosynthesis. In terms of biological role, catalyzes the reductive methylation of 2'-deoxyuridine-5'-monophosphate (dUMP) to 2'-deoxythymidine-5'-monophosphate (dTMP) while utilizing 5,10-methylenetetrahydrofolate (mTHF) as the methyl donor, and NADPH and FADH(2) as the reductant. In Corynebacterium aurimucosum (strain ATCC 700975 / DSM 44827 / CIP 107346 / CN-1) (Corynebacterium nigricans), this protein is Flavin-dependent thymidylate synthase.